We begin with the raw amino-acid sequence, 338 residues long: tRNA-specific 2-thiouridylase MnmA (338 aa).

ATP is bound by residues 6–13 and methionine 32; that span reads AMSGGVDS. The active-site Nucleophile is the cysteine 92. A disulfide bridge connects residues cysteine 92 and cysteine 186. Glycine 116 contacts ATP. An interaction with tRNA region spans residues 134–136; it reads KDQ. The active-site Cysteine persulfide intermediate is the cysteine 186. Residues 288–289 form an interaction with tRNA region; that stretch reads RY.

Belongs to the MnmA/TRMU family.

It is found in the cytoplasm. It catalyses the reaction S-sulfanyl-L-cysteinyl-[protein] + uridine(34) in tRNA + AH2 + ATP = 2-thiouridine(34) in tRNA + L-cysteinyl-[protein] + A + AMP + diphosphate + H(+). Its function is as follows. Catalyzes the 2-thiolation of uridine at the wobble position (U34) of tRNA, leading to the formation of s(2)U34. This chain is tRNA-specific 2-thiouridylase MnmA, found in Campylobacter lari (strain RM2100 / D67 / ATCC BAA-1060).